The following is a 724-amino-acid chain: Aquaglyceroporin-4 (724 aa).

3 disordered regions span residues 1–167, 248–267, and 302–396; these read MADE…SIRR, INMA…NQAD, and AHGL…DLDG. The Cytoplasmic portion of the chain corresponds to 1 to 434; the sequence is MADEEIKPTS…VIRLRFREPL (434 aa). The segment covering 87–96 has biased composition (polar residues); it reads LTGQVPQDND. Positions 252–265 are enriched in low complexity; it reads QQQQQQQQQQPQNQ. Polar residues-rich tracts occupy residues 307-325 and 360-370; these read SPTN…TAPS and PSQTSQNSQNE. The chain crosses the membrane as a helical span at residues 435–455; the sequence is AELLAVTCQLTLGFCADLVVV. Over 456–472 the chain is Extracellular; it reads TSGKNASPAGNEATTDW. A helical transmembrane segment spans residues 473-493; it reads AWGLASMLGIYIAGGISGAHL. Positions 494 to 496 match the NPA 1 motif; it reads NPA. The Cytoplasmic portion of the chain corresponds to 494–513; that stretch reads NPAISIMLWIYRGFPLRKVP. A helical membrane pass occupies residues 514 to 534; the sequence is MYVLAQILGAFIAALISFGLY. Topologically, residues 535-567 are extracellular; that stretch reads QTNIVEYGGTDLKTSDTMGAFITYPRYPWINAS. The N-linked (GlcNAc...) asparagine glycan is linked to Asn-565. The helical transmembrane segment at 568-588 threads the bilayer; it reads TSFFTEFVGTAILAVAVLALG. Topologically, residues 589–595 are cytoplasmic; it reads DDMNAPP. The chain crosses the membrane as a helical span at residues 596-616; the sequence is GAGMSAFILGLVITVLSMAFG. Over 617 to 647 the chain is Extracellular; the sequence is YNTGAALNPSRDLGPRLALAALGYGKDLFTD. The NPA 2 signature appears at 624 to 626; sequence NPS. The chain crosses the membrane as a helical span at residues 648 to 668; it reads VYWIWGNWCAPILGAIFGAFL. Over 669–724 the chain is Cytoplasmic; sequence YDAAIFAGGESPVNYPRKRIKRAGHKWRKKWGVRLRKMKPAKKGEDEAYRRWKESQ.

Belongs to the MIP/aquaporin (TC 1.A.8) family.

It is found in the membrane. The catalysed reaction is H2O(in) = H2O(out). The enzyme catalyses glycerol(in) = glycerol(out). Its function is as follows. Water channel required to facilitate the transport of water across membranes. May play a role in the vegetative growth. The protein is Aquaglyceroporin-4 of Botryotinia fuckeliana (strain B05.10) (Noble rot fungus).